Here is a 304-residue protein sequence, read N- to C-terminus: MPHILPEPSVTGPRHISDTNLLAWYQRSHRDLPWREPGVSPWQILVSEFMLQQTPAARVLAIWPDWVRRWPTPSATATASTADVLRAWGKLGYPRRAKRLHECATVIARDHNDVVPDDIEILVTLPGVGSYTARAVACFAYRQRVPVVDTNVRRVVARAVHGRADAGAPSVPRDHADVLALLPHRETAPEFSVALMELGATVCTARTPRCGLCPLDWCAWRHAGYPPSDGPPRRGQAYTGTDRQVRGRLLDVLRAAEFPVTRAELDVAWLTDTAQRDRALESLLADALVTRTVDGRFALPGEGF.

The active-site Proton donor/acceptor is the E48. Positions 111-139 constitute a HhH domain; sequence HNDVVPDDIEILVTLPGVGSYTARAVACF. [4Fe-4S] cluster contacts are provided by C203, C210, C213, and C218.

This sequence belongs to the Nth/MutY family. It depends on [4Fe-4S] cluster as a cofactor.

It carries out the reaction Hydrolyzes free adenine bases from 7,8-dihydro-8-oxoguanine:adenine mismatched double-stranded DNA, leaving an apurinic site.. In terms of biological role, adenine glycosylase active on G:A and C:A mispairs, as well as processing 7,8-dihydro-8-oxoguanine:A (8-oxoG) mismatches. This is Adenine DNA glycosylase (mutY) from Mycobacterium tuberculosis (strain CDC 1551 / Oshkosh).